Here is a 100-residue protein sequence, read N- to C-terminus: Small ribosomal subunit protein uS14 (100 aa).

This sequence belongs to the universal ribosomal protein uS14 family. As to quaternary structure, part of the 30S ribosomal subunit. Contacts proteins S3 and S10.

Functionally, binds 16S rRNA, required for the assembly of 30S particles and may also be responsible for determining the conformation of the 16S rRNA at the A site. This Prochlorococcus marinus (strain NATL1A) protein is Small ribosomal subunit protein uS14.